The primary structure comprises 475 residues: Ribulose bisphosphate carboxylase large chain (475 aa).

The propeptide occupies 1–2 (MS). P3 carries the N-acetylproline modification. K14 bears the N6,N6,N6-trimethyllysine mark. Residues N123 and T173 each contribute to the substrate site. K175 serves as the catalytic Proton acceptor. Residue K177 participates in substrate binding. Residues K201, D203, and E204 each coordinate Mg(2+). K201 bears the N6-carboxylysine mark. The active-site Proton acceptor is the H294. 3 residues coordinate substrate: R295, H327, and S379.

It belongs to the RuBisCO large chain family. Type I subfamily. Heterohexadecamer of 8 large chains and 8 small chains; disulfide-linked. The disulfide link is formed within the large subunit homodimers. It depends on Mg(2+) as a cofactor. Post-translationally, the disulfide bond which can form in the large chain dimeric partners within the hexadecamer appears to be associated with oxidative stress and protein turnover.

It localises to the plastid. Its subcellular location is the chloroplast. It carries out the reaction 2 (2R)-3-phosphoglycerate + 2 H(+) = D-ribulose 1,5-bisphosphate + CO2 + H2O. The enzyme catalyses D-ribulose 1,5-bisphosphate + O2 = 2-phosphoglycolate + (2R)-3-phosphoglycerate + 2 H(+). Its function is as follows. RuBisCO catalyzes two reactions: the carboxylation of D-ribulose 1,5-bisphosphate, the primary event in carbon dioxide fixation, as well as the oxidative fragmentation of the pentose substrate in the photorespiration process. Both reactions occur simultaneously and in competition at the same active site. This chain is Ribulose bisphosphate carboxylase large chain, found in Chlorokybus atmophyticus (Soil alga).